Consider the following 394-residue polypeptide: Phosphoglycerate kinase (394 aa).

Substrate-binding positions include 21–23 (DFN), Arg-36, 59–62 (HLGR), Arg-118, and Arg-151. Ser-183 bears the Phosphoserine mark. Residues Lys-201 and Gly-292 each contribute to the ATP site. At Thr-299 the chain carries Phosphothreonine. ATP-binding positions include Glu-323 and 350–353 (GGDS).

It belongs to the phosphoglycerate kinase family. In terms of assembly, monomer.

The protein localises to the cytoplasm. It catalyses the reaction (2R)-3-phosphoglycerate + ATP = (2R)-3-phospho-glyceroyl phosphate + ADP. Its pathway is carbohydrate degradation; glycolysis; pyruvate from D-glyceraldehyde 3-phosphate: step 2/5. The sequence is that of Phosphoglycerate kinase from Bacillus cereus (strain B4264).